Here is a 393-residue protein sequence, read N- to C-terminus: Demethylspheroidene O-methyltransferase (393 aa).

Residues 1–36 form a disordered region; the sequence is MPKDDHTGATADRTAQPTGTGKQPLVPGQPGAAPVQ. Residues 26-36 are compositionally biased toward low complexity; that stretch reads VPGQPGAAPVQ. Asp-259 and Arg-297 together coordinate S-adenosyl-L-methionine.

Belongs to the class I-like SAM-binding methyltransferase superfamily. Cation-independent O-methyltransferase family.

It catalyses the reaction demethylspheroidene + S-adenosyl-L-methionine = spheroidene + S-adenosyl-L-homocysteine + H(+). It participates in carotenoid biosynthesis; spheroidene biosynthesis. Methyltransferase that mediates the O-methylation of 1-hydroxy carotenoids. Converts hydroxyneurosporene to methoxyneurosporene or demethylspheroidene to spheroidene. Also able to produce spirilloxanthin. In Rhodobacter capsulatus (strain ATCC BAA-309 / NBRC 16581 / SB1003), this protein is Demethylspheroidene O-methyltransferase (crtF).